Reading from the N-terminus, the 403-residue chain is Glucosyl-3-phosphoglycerate synthase (403 aa).

Asp-150 serves as a coordination point for a divalent metal cation. Residue 189-192 (GRVT) coordinates (2R)-3-phosphoglycerate. Residue His-273 participates in a divalent metal cation binding.

The protein belongs to the glycosyltransferase 2 family. Homodimer. The cofactor is Mn(2+). It depends on Co(2+) as a cofactor. Requires Mg(2+) as cofactor. Ni(2+) serves as cofactor.

The enzyme catalyses an NDP-alpha-D-glucose + (2R)-3-phosphoglycerate = (2R)-2-O-(alpha-D-glucopyranosyl)-3-phospho-glycerate + a ribonucleoside 5'-diphosphate + H(+). Functionally, involved in the biosynthesis of 6-O-methylglucose lipopolysaccarides (MGLPs). Catalyzes the transfer of a glucose (Glc) moiety from uridine diphosphate (UDP-Glc) to the position 2 of 3-phospho-D-glycerate (3-PGA) to form glucosyl-3-phosphoglycerate (GPG). GpgS is most active with UDP-glucose, followed by GDP-glucose, ADP-glucose, and to a lesser extent, TDP-glucose. 3-PGA is the only acceptor for these glucosyl donors. This is Glucosyl-3-phosphoglycerate synthase from Persephonella marina (strain DSM 14350 / EX-H1).